Consider the following 209-residue polypeptide: Ribosomal RNA large subunit methyltransferase E (209 aa).

Gly-63, Trp-65, Asp-83, Asp-99, and Asp-124 together coordinate S-adenosyl-L-methionine. Lys-164 functions as the Proton acceptor in the catalytic mechanism.

It belongs to the class I-like SAM-binding methyltransferase superfamily. RNA methyltransferase RlmE family.

The protein localises to the cytoplasm. The catalysed reaction is uridine(2552) in 23S rRNA + S-adenosyl-L-methionine = 2'-O-methyluridine(2552) in 23S rRNA + S-adenosyl-L-homocysteine + H(+). Specifically methylates the uridine in position 2552 of 23S rRNA at the 2'-O position of the ribose in the fully assembled 50S ribosomal subunit. This Shewanella woodyi (strain ATCC 51908 / MS32) protein is Ribosomal RNA large subunit methyltransferase E.